The primary structure comprises 514 residues: Peptide chain release factor 3 (514 aa).

A tr-type G domain is found at 8–268 (KKRRTFAIIS…IFLKFAPEPH (261 aa)). GTP is bound by residues 17-24 (SHPDAGKT), 85-89 (DTPGH), and 139-142 (NKLD).

Belongs to the TRAFAC class translation factor GTPase superfamily. Classic translation factor GTPase family. PrfC subfamily.

It is found in the cytoplasm. Its function is as follows. Increases the formation of ribosomal termination complexes and stimulates activities of RF-1 and RF-2. It binds guanine nucleotides and has strong preference for UGA stop codons. It may interact directly with the ribosome. The stimulation of RF-1 and RF-2 is significantly reduced by GTP and GDP, but not by GMP. In Streptococcus pneumoniae (strain 70585), this protein is Peptide chain release factor 3.